The primary structure comprises 379 residues: Queuine tRNA-ribosyltransferase (379 aa).

The active-site Proton acceptor is the Asp94. Residues Asp94 to Phe98, Asp148, Gln191, and Gly218 each bind substrate. The segment at Gly249 to Ser255 is RNA binding. The Nucleophile role is filled by Asp268. The RNA binding; important for wobble base 34 recognition stretch occupies residues Thr273–Arg277. Residues Cys306, Cys308, Cys311, and His337 each coordinate Zn(2+).

This sequence belongs to the queuine tRNA-ribosyltransferase family. Homodimer. Within each dimer, one monomer is responsible for RNA recognition and catalysis, while the other monomer binds to the replacement base PreQ1. Zn(2+) serves as cofactor.

The catalysed reaction is 7-aminomethyl-7-carbaguanine + guanosine(34) in tRNA = 7-aminomethyl-7-carbaguanosine(34) in tRNA + guanine. It participates in tRNA modification; tRNA-queuosine biosynthesis. In terms of biological role, catalyzes the base-exchange of a guanine (G) residue with the queuine precursor 7-aminomethyl-7-deazaguanine (PreQ1) at position 34 (anticodon wobble position) in tRNAs with GU(N) anticodons (tRNA-Asp, -Asn, -His and -Tyr). Catalysis occurs through a double-displacement mechanism. The nucleophile active site attacks the C1' of nucleotide 34 to detach the guanine base from the RNA, forming a covalent enzyme-RNA intermediate. The proton acceptor active site deprotonates the incoming PreQ1, allowing a nucleophilic attack on the C1' of the ribose to form the product. After dissociation, two additional enzymatic reactions on the tRNA convert PreQ1 to queuine (Q), resulting in the hypermodified nucleoside queuosine (7-(((4,5-cis-dihydroxy-2-cyclopenten-1-yl)amino)methyl)-7-deazaguanosine). The polypeptide is Queuine tRNA-ribosyltransferase (Listeria innocua serovar 6a (strain ATCC BAA-680 / CLIP 11262)).